The following is a 254-amino-acid chain: Leucyl/phenylalanyl-tRNA--protein transferase (254 aa).

Belongs to the L/F-transferase family.

It localises to the cytoplasm. The catalysed reaction is N-terminal L-lysyl-[protein] + L-leucyl-tRNA(Leu) = N-terminal L-leucyl-L-lysyl-[protein] + tRNA(Leu) + H(+). It carries out the reaction N-terminal L-arginyl-[protein] + L-leucyl-tRNA(Leu) = N-terminal L-leucyl-L-arginyl-[protein] + tRNA(Leu) + H(+). The enzyme catalyses L-phenylalanyl-tRNA(Phe) + an N-terminal L-alpha-aminoacyl-[protein] = an N-terminal L-phenylalanyl-L-alpha-aminoacyl-[protein] + tRNA(Phe). Functions in the N-end rule pathway of protein degradation where it conjugates Leu, Phe and, less efficiently, Met from aminoacyl-tRNAs to the N-termini of proteins containing an N-terminal arginine or lysine. In Burkholderia multivorans (strain ATCC 17616 / 249), this protein is Leucyl/phenylalanyl-tRNA--protein transferase.